Reading from the N-terminus, the 385-residue chain is POU domain, class 3, transcription factor 2-B (385 aa).

Disordered stretches follow at residues 106-136, 149-209, and 351-385; these read LVHP…SSNG, NGMI…TPTS, and EKRM…TSVQ. A compositionally biased stretch (polar residues) spans 122–136; sequence STGSTHLSSMASSNG. The span at 165 to 178 shows a compositional bias: basic and acidic residues; that stretch reads LRDSHDDHHGDHGH. The span at 179–196 shows a compositional bias: low complexity; that stretch reads QQPSQTQQQQQQHSQLQG. In terms of domain architecture, POU-specific spans 204–278; the sequence is EDTPTSDDLE…LLNKWLEEAD (75 aa). A DNA-binding region (homeobox) is located at residues 296-355; the sequence is KRKKRTSIEVSVKGALESHFLKCPKPAAQEITSLADSLQLEKEVVRVWFCNRRQKEKRMT.

This sequence belongs to the POU transcription factor family. Class-3 subfamily. Expressed in the developing brain and spinal cord. Also found in a restricted region of the auditory vesicle during development. In the adult, expression is restricted to the brain.

The protein localises to the nucleus. Its function is as follows. Transcription factor that may be implicated in patterning of the central nervous system during early development. The chain is POU domain, class 3, transcription factor 2-B (pou3f2-b) from Xenopus laevis (African clawed frog).